We begin with the raw amino-acid sequence, 579 residues long: Folliculin (579 aa).

A disordered region spans residues 32–52; the sequence is GASCGDSIGQGEQAEDEEMGI. In terms of domain architecture, uDENN FLCN/SMCR8-type spans 86–242; it reads RSLAAGHPGY…RNGNAARSLT (157 aa). The 155-residue stretch at 337–491 folds into the cDENN FLCN/SMCR8-type domain; sequence NMVQRRMGVF…ILNKIEAALS (155 aa). In terms of domain architecture, dDENN FLCN/SMCR8-type spans 493 to 558; it reads ENLSMDVVDQ…LLKFWMTGLS (66 aa).

It belongs to the folliculin family. As to quaternary structure, component of the lysosomal folliculin complex (LFC).

The protein localises to the lysosome membrane. It localises to the cytoplasm. The protein resides in the cytosol. It is found in the cell projection. Its subcellular location is the cilium. The protein localises to the cytoskeleton. It localises to the microtubule organizing center. The protein resides in the centrosome. It is found in the spindle. Its subcellular location is the nucleus. Its activity is regulated as follows. GTPase-activating activity is inhibited in the folliculin complex (LFC), which stabilizes the GDP-bound state of RagA/RRAGA (or RagB/RRAGB), because Arg-164 is located far from the RagC/RRAGC or RagD/RRAGD nucleotide pocket. Disassembly of the LFC complex upon amino acid restimulation liberates the GTPase-activating activity. Multi-functional protein, involved in both the cellular response to amino acid availability and in the regulation of glycolysis. GTPase-activating protein that plays a key role in the cellular response to amino acid availability through regulation of the non-canonical mTORC1 signaling cascade controlling the MiT/TFE factors tfeb and tfe3. Activates mTORC1 by acting as a GTPase-activating protein: specifically stimulates GTP hydrolysis by RagC/RRAGC or RagD/RRAGD, promoting the conversion to the GDP-bound state of RagC/RRAGC or RagD/RRAGD, and thereby activating the kinase activity of mTORC1. The GTPase-activating activity is inhibited during starvation and activated in presence of nutrients. Acts as a key component for non-canonical mTORC1-dependent control of the MiT/TFE factors tfeb and tfe3, while it is not involved in mTORC1-dependent phosphorylation of canonical RPS6KB1/S6K1 and EIF4EBP1/4E-BP1. In low-amino acid conditions, the lysosomal folliculin complex (LFC) is formed on the membrane of lysosomes, which inhibits the GTPase-activating activity of flcn, inactivates mTORC1 and maximizes nuclear translocation of tfeb and tfe3. Upon amino acid restimulation, RagA/RRAGA (or RagB/RRAGB) nucleotide exchange promotes disassembly of the LFC complex and liberates the GTPase-activating activity of flcn, leading to activation of mTORC1 and subsequent cytoplasmic retention of tfeb and tfe3. Required for the exit of hematopoietic stem cell from pluripotency by promoting mTOR-dependent cytoplasmic retention of tfe3, thereby increasing Wnt signaling. Acts as an inhibitor of browning of adipose tissue by regulating mTOR-dependent cytoplasmic retention of tfe3. In response to flow stress, regulates STK11/LKB1 accumulation and mTORC1 activation through primary cilia. Required for starvation-induced perinuclear clustering of lysosomes by promoting association of rilp with its effector rab34. Involved in the control of embryonic stem cells differentiation; together with lamtor1 it is necessary to recruit and activate RagC/RRAGC and RagD/RRAGD at the lysosomes, and to induce exit of embryonic stem cells from pluripotency via non-canonical, mTOR-independent tfe3 inactivation. Regulates glycolysis by binding to lactate dehydrogenase ldha, acting as an uncompetitive inhibitor. The polypeptide is Folliculin (Xenopus tropicalis (Western clawed frog)).